A 171-amino-acid polypeptide reads, in one-letter code: Cation channel sperm-associated auxiliary subunit TMEM249 (171 aa).

The Cytoplasmic segment spans residues 1 to 2; that stretch reads ML. A helical membrane pass occupies residues 3–17; that stretch reads FIICLVFISCNVLRE. The Extracellular segment spans residues 18–28; the sequence is VKYQETWCFPA. The chain crosses the membrane as a helical span at residues 29–40; sequence YGMVIGLWLMLS. The Cytoplasmic segment spans residues 41 to 171; sequence SIPQRRLVLN…TKSSVNDLDV (131 aa).

As to quaternary structure, component of the CatSper complex or CatSpermasome composed of the core pore-forming members CATSPER1, CATSPER2, CATSPER3 and CATSPER4 as well as auxiliary members CATSPERB, CATSPERG2, CATSPERD, CATSPERE, CATSPERZ, C2CD6/CATSPERT, SLCO6C1, TMEM249, TMEM262 and EFCAB9. HSPA1 may be an additional auxiliary complex member. The core complex members CATSPER1, CATSPER2, CATSPER3 and CATSPER4 form a heterotetrameric channel. The auxiliary CATSPERB, CATSPERG2, CATSPERD and CATSPERE subunits form a pavilion-like structure over the pore which stabilizes the complex through interactions with CATSPER4, CATSPER3, CATSPER1 and CATSPER2 respectively. SLCO6C1 interacts with CATSPERE and TMEM262/CATSPERH interacts with CATSPERB, further stabilizing the complex. C2CD6/CATSPERT interacts at least with CATSPERD and is required for targeting the CatSper complex in the flagellar membrane.

The protein resides in the cell projection. It localises to the cilium. The protein localises to the flagellum membrane. Auxiliary component of the CatSper complex, a complex involved in sperm cell hyperactivation. This chain is Cation channel sperm-associated auxiliary subunit TMEM249, found in Mus musculus (Mouse).